Here is a 243-residue protein sequence, read N- to C-terminus: ATP synthase subunit a, chloroplastic (243 aa).

5 helical membrane passes run 32-52, 91-111, 130-150, 195-215, and 216-236; these read AQVLITSWFVLGLLLGIALIA, IPFVGTLFLFIFVSNWSGALI, INTTVALALLTSVAYFYAGLN, LVVAVLVSLVPLVIPVPMMFL, and GLFTSGIQALIFATLAGAYIG.

The protein belongs to the ATPase A chain family. F-type ATPases have 2 components, CF(1) - the catalytic core - and CF(0) - the membrane proton channel. CF(1) has five subunits: alpha(3), beta(3), gamma(1), delta(1), epsilon(1). CF(0) has four main subunits: a, b, b' and c.

It localises to the plastid. The protein resides in the chloroplast thylakoid membrane. Key component of the proton channel; it plays a direct role in the translocation of protons across the membrane. This Chaetosphaeridium globosum (Charophycean green alga) protein is ATP synthase subunit a, chloroplastic.